A 207-amino-acid chain; its full sequence is ATP-dependent Clp protease proteolytic subunit 2 (207 aa).

The active-site Nucleophile is S102. The active site involves H127.

The protein belongs to the peptidase S14 family. As to quaternary structure, fourteen ClpP subunits assemble into 2 heptameric rings which stack back to back to give a disk-like structure with a central cavity, resembling the structure of eukaryotic proteasomes.

The protein localises to the cytoplasm. The enzyme catalyses Hydrolysis of proteins to small peptides in the presence of ATP and magnesium. alpha-casein is the usual test substrate. In the absence of ATP, only oligopeptides shorter than five residues are hydrolyzed (such as succinyl-Leu-Tyr-|-NHMec, and Leu-Tyr-Leu-|-Tyr-Trp, in which cleavage of the -Tyr-|-Leu- and -Tyr-|-Trp bonds also occurs).. Cleaves peptides in various proteins in a process that requires ATP hydrolysis. Has a chymotrypsin-like activity. Plays a major role in the degradation of misfolded proteins. In Bifidobacterium longum (strain NCC 2705), this protein is ATP-dependent Clp protease proteolytic subunit 2.